A 61-amino-acid polypeptide reads, in one-letter code: N-acetyl-D-glucosamine kinase (61 aa).

Tyrosine 30 carries the post-translational modification Phosphotyrosine. Serine 45 lines the ATP pocket.

Belongs to the eukaryotic-type N-acetylglucosamine kinase family. Homodimer.

The catalysed reaction is N-acetyl-D-glucosamine + ATP = N-acetyl-D-glucosamine 6-phosphate + ADP + H(+). It catalyses the reaction aldehydo-N-acetyl-D-mannosamine + ATP = aldehydo-N-acetyl-D-mannosamine 6-phosphate + ADP + H(+). It carries out the reaction N-acetyl-D-muramoyl-L-alanyl-D-isoglutamine + ATP = 6-O-phospho-N-acetyl-D-muramoyl-L-alanyl-D-isoglutamine + ADP + H(+). It participates in amino-sugar metabolism; N-acetylneuraminate degradation. In terms of biological role, converts endogenous N-acetylglucosamine (GlcNAc), a major component of complex carbohydrates, from lysosomal degradation or nutritional sources into GlcNAc 6-phosphate. Also has N-acetylmannosamine (ManNAc) kinase activity. Involved in the N-glycolylneuraminic acid (Neu5Gc) degradation pathway. Also involved in innate immunity by promoting detection of bacterial peptidoglycan by NOD2: acts by catalyzing phosphorylation of muramyl dipeptide (MDP), a fragment of bacterial peptidoglycan, to generate 6-O-phospho-muramyl dipeptide, which acts as a direct ligand for NOD2. This Mesocricetus auratus (Golden hamster) protein is N-acetyl-D-glucosamine kinase.